A 402-amino-acid chain; its full sequence is Mannonate dehydratase 1 (402 aa).

The protein belongs to the mannonate dehydratase family. Fe(2+) serves as cofactor. It depends on Mn(2+) as a cofactor.

The catalysed reaction is D-mannonate = 2-dehydro-3-deoxy-D-gluconate + H2O. The protein operates within carbohydrate metabolism; pentose and glucuronate interconversion. Catalyzes the dehydration of D-mannonate. The sequence is that of Mannonate dehydratase 1 (uxuA1) from Agrobacterium fabrum (strain C58 / ATCC 33970) (Agrobacterium tumefaciens (strain C58)).